A 298-amino-acid polypeptide reads, in one-letter code: ATP phosphoribosyltransferase (298 aa).

The protein belongs to the ATP phosphoribosyltransferase family. Long subfamily. The cofactor is Mg(2+).

The protein localises to the cytoplasm. It carries out the reaction 1-(5-phospho-beta-D-ribosyl)-ATP + diphosphate = 5-phospho-alpha-D-ribose 1-diphosphate + ATP. The protein operates within amino-acid biosynthesis; L-histidine biosynthesis; L-histidine from 5-phospho-alpha-D-ribose 1-diphosphate: step 1/9. Its activity is regulated as follows. Feedback inhibited by histidine. Its function is as follows. Catalyzes the condensation of ATP and 5-phosphoribose 1-diphosphate to form N'-(5'-phosphoribosyl)-ATP (PR-ATP). Has a crucial role in the pathway because the rate of histidine biosynthesis seems to be controlled primarily by regulation of HisG enzymatic activity. The sequence is that of ATP phosphoribosyltransferase from Vibrio campbellii (strain ATCC BAA-1116).